The primary structure comprises 176 residues: NAD(P)H-quinone oxidoreductase subunit 6, chloroplastic (176 aa).

The next 5 helical transmembrane spans lie at 10-30, 32-52, 61-81, 92-112, and 152-172; these read FLLVFLGSGLILGGLGVVLLP, PIYSAFSLGLVLVCTSLFYIL, AQLLIYVGAINVLIIFAVMFM, LWTVGDGITSMVCISLFISLI, and FFLPFELISIILLVALIGAIA.

This sequence belongs to the complex I subunit 6 family. NDH is composed of at least 16 different subunits, 5 of which are encoded in the nucleus.

Its subcellular location is the plastid. The protein localises to the chloroplast thylakoid membrane. It carries out the reaction a plastoquinone + NADH + (n+1) H(+)(in) = a plastoquinol + NAD(+) + n H(+)(out). The catalysed reaction is a plastoquinone + NADPH + (n+1) H(+)(in) = a plastoquinol + NADP(+) + n H(+)(out). Functionally, NDH shuttles electrons from NAD(P)H:plastoquinone, via FMN and iron-sulfur (Fe-S) centers, to quinones in the photosynthetic chain and possibly in a chloroplast respiratory chain. The immediate electron acceptor for the enzyme in this species is believed to be plastoquinone. Couples the redox reaction to proton translocation, and thus conserves the redox energy in a proton gradient. The polypeptide is NAD(P)H-quinone oxidoreductase subunit 6, chloroplastic (ndhG) (Solanum lycopersicum (Tomato)).